Here is a 493-residue protein sequence, read N- to C-terminus: Alpha-amylase-related protein (493 aa).

The first 19 residues, methionine 1–alanine 19, serve as a signal peptide directing secretion. Residue glutamine 20 is modified to Pyrrolidone carboxylic acid. A disulfide bond links cysteine 47 and cysteine 103. Ca(2+) is bound by residues asparagine 117, glutamine 168, and aspartate 177. A disulfide bridge connects residues cysteine 156 and cysteine 170. Arginine 205 lines the chloride pocket. The Nucleophile role is filled by aspartate 207. Histidine 211 provides a ligand contact to Ca(2+). Glutamate 244 functions as the Proton donor in the catalytic mechanism. Chloride-binding residues include asparagine 307 and arginine 342. Cystine bridges form between cysteine 375-cysteine 381, cysteine 417-cysteine 440, and cysteine 447-cysteine 459.

Belongs to the glycosyl hydrolase 13 family. In terms of assembly, monomer. Ca(2+) is required as a cofactor. The cofactor is chloride.

Its subcellular location is the secreted. The catalysed reaction is Endohydrolysis of (1-&gt;4)-alpha-D-glucosidic linkages in polysaccharides containing three or more (1-&gt;4)-alpha-linked D-glucose units.. This is Alpha-amylase-related protein (Amyrel) from Drosophila mauritiana (Fruit fly).